Consider the following 325-residue polypeptide: NADH-quinone oxidoreductase subunit H (325 aa).

Helical transmembrane passes span 11-31 (ILIS…CGAF), 81-101 (AIFT…FAIV), 114-134 (IGIL…LFAG), 154-174 (LSYE…AGSF), 186-206 (VWNV…GVAV), 237-257 (FFVG…TLFF), 265-285 (LPPF…FILI), and 304-324 (VCLP…LYNA).

It belongs to the complex I subunit 1 family. NDH-1 is composed of 13 different subunits. Subunits NuoA, H, J, K, L, M, N constitute the membrane sector of the complex.

The protein localises to the cell inner membrane. It carries out the reaction a quinone + NADH + 5 H(+)(in) = a quinol + NAD(+) + 4 H(+)(out). Its function is as follows. NDH-1 shuttles electrons from NADH, via FMN and iron-sulfur (Fe-S) centers, to quinones in the respiratory chain. The immediate electron acceptor for the enzyme in this species is believed to be ubiquinone. Couples the redox reaction to proton translocation (for every two electrons transferred, four hydrogen ions are translocated across the cytoplasmic membrane), and thus conserves the redox energy in a proton gradient. This subunit may bind ubiquinone. This Yersinia enterocolitica serotype O:8 / biotype 1B (strain NCTC 13174 / 8081) protein is NADH-quinone oxidoreductase subunit H.